The chain runs to 179 residues: Large ribosomal subunit protein uL5 (179 aa).

This sequence belongs to the universal ribosomal protein uL5 family. As to quaternary structure, part of the 50S ribosomal subunit; part of the 5S rRNA/L5/L18/L25 subcomplex. Contacts the 5S rRNA and the P site tRNA. Forms a bridge to the 30S subunit in the 70S ribosome.

Its function is as follows. This is one of the proteins that bind and probably mediate the attachment of the 5S RNA into the large ribosomal subunit, where it forms part of the central protuberance. In the 70S ribosome it contacts protein S13 of the 30S subunit (bridge B1b), connecting the 2 subunits; this bridge is implicated in subunit movement. Contacts the P site tRNA; the 5S rRNA and some of its associated proteins might help stabilize positioning of ribosome-bound tRNAs. The protein is Large ribosomal subunit protein uL5 of Pseudomonas savastanoi pv. phaseolicola (strain 1448A / Race 6) (Pseudomonas syringae pv. phaseolicola (strain 1448A / Race 6)).